Here is a 239-residue protein sequence, read N- to C-terminus: Peroxygenase (239 aa).

G2 carries the N-acetylglycine modification. Residues 60-95 (HNMSVLQQRAAFFDRNNDGIVYPWETYQGFRAVGFG) form the EF-hand domain. Residues D73, N75, D77, and E84 each coordinate Ca(2+). Positions 116 to 125 (PSWIPSPVLS) match the Proline-knot motif.

The protein belongs to the caleosin family. Homodimer. The cofactor is heme b. Ca(2+) is required as a cofactor. Expressed in pollen (at protein level). Not expressed in leaf, root, stem, tepal, ovary, style, filament or stigma (at protein level).

Its subcellular location is the lipid droplet. The protein localises to the microsome membrane. The catalysed reaction is RH + ROOH = ROH + ROH.. Functionally, calcium-binding peroxygenase involved in the degradation of storage lipid in oil bodies. The chain is Peroxygenase from Lilium longiflorum (Trumpet lily).